We begin with the raw amino-acid sequence, 237 residues long: uncharacterized protein (237 aa).

The GP-PDE domain maps to 4–237 (QFLIAHRGYS…VKFQIAAQLY (234 aa)).

To glycerophosphoryl diester phosphodiesterases (EC 3.1.4.46). This sequence to M.genitalium MG293.

This is an uncharacterized protein from Mycoplasma pneumoniae (strain ATCC 29342 / M129 / Subtype 1) (Mycoplasmoides pneumoniae).